Reading from the N-terminus, the 514-residue chain is Mitochondrial-processing peptidase subunit alpha (514 aa).

The transit peptide at 1–55 (MLLRKSIPYIKICRDISASVRNNKEIAQKLPLSVPLPMENNSKSIEKGCPPMGRN) directs the protein to the mitochondrion.

The protein belongs to the peptidase M16 family. As to quaternary structure, heterodimer of mppa-1 (alpha) and mppb-1 (beta) subunits, forming the mitochondrial processing protease (MPP) in which mppa-1 is involved in substrate recognition and binding and mppb-1 is the catalytic subunit.

Its subcellular location is the mitochondrion matrix. In terms of biological role, substrate recognition and binding subunit of the essential mitochondrial processing protease (MPP), which cleaves the mitochondrial sequence off newly imported precursors proteins. The protein is Mitochondrial-processing peptidase subunit alpha of Caenorhabditis elegans.